The primary structure comprises 319 residues: Ribose-phosphate pyrophosphokinase (319 aa).

Residues 41–43 and 100–101 each bind ATP; these read NGE and RQ. Mg(2+) contacts are provided by His-134 and Asp-175. Lys-198 is an active-site residue. D-ribose 5-phosphate contacts are provided by residues Arg-200, Asp-224, and 228-232; that span reads DTAGS.

This sequence belongs to the ribose-phosphate pyrophosphokinase family. Class I subfamily. As to quaternary structure, homohexamer. Mg(2+) serves as cofactor.

The protein resides in the cytoplasm. It catalyses the reaction D-ribose 5-phosphate + ATP = 5-phospho-alpha-D-ribose 1-diphosphate + AMP + H(+). It participates in metabolic intermediate biosynthesis; 5-phospho-alpha-D-ribose 1-diphosphate biosynthesis; 5-phospho-alpha-D-ribose 1-diphosphate from D-ribose 5-phosphate (route I): step 1/1. Its function is as follows. Involved in the biosynthesis of the central metabolite phospho-alpha-D-ribosyl-1-pyrophosphate (PRPP) via the transfer of pyrophosphoryl group from ATP to 1-hydroxyl of ribose-5-phosphate (Rib-5-P). In Clostridium acetobutylicum (strain ATCC 824 / DSM 792 / JCM 1419 / IAM 19013 / LMG 5710 / NBRC 13948 / NRRL B-527 / VKM B-1787 / 2291 / W), this protein is Ribose-phosphate pyrophosphokinase.